Reading from the N-terminus, the 288-residue chain is Protein sprouty homolog 3 (288 aa).

The SPR domain maps to 154–260 (KCVPCTAARP…GYDSLRRPGC (107 aa)).

Belongs to the sprouty family. In terms of assembly, interacts with TESK1. Interacts with USP11. Interacts with CAV1 (via C-terminus). Widely expressed; particularly in the fetal tissues. Expressed in the brain with expression the highest in Purkinje cells in the cerebellum (at protein level). Expressed in the myocardium of the heart.

Its subcellular location is the cytoplasm. In terms of biological role, inhibits neurite branching, arbor length and neurite complexity. Inhibits EGF-mediated p42/44 ERK signaling. Negatively regulates the MAPK cascade, resulting in a reduction of extracellular matrix protein accumulation. May function as an antagonist of fibroblast growth factor (FGF) pathways and may negatively modulate respiratory organogenesis. The chain is Protein sprouty homolog 3 from Homo sapiens (Human).